The following is a 61-amino-acid chain: Phospholipase A2 (61 aa).

Residues tyrosine 27, glycine 29, and glycine 31 each contribute to the Ca(2+) site. Cysteines 28 and 35 form a disulfide. Histidine 38 is an active-site residue. Residue aspartate 39 coordinates Ca(2+). Cysteine 41 and cysteine 59 are joined by a disulfide. Aspartate 60 is an active-site residue.

The protein belongs to the phospholipase A2 family. Group II subfamily. D49 sub-subfamily. In terms of assembly, homodimer. Ca(2+) is required as a cofactor. In terms of tissue distribution, expressed by the venom gland.

It is found in the secreted. It catalyses the reaction a 1,2-diacyl-sn-glycero-3-phosphocholine + H2O = a 1-acyl-sn-glycero-3-phosphocholine + a fatty acid + H(+). Functionally, snake venom phospholipase A2 (PLA2) that displays edema-inducing activities. PLA2 catalyzes the calcium-dependent hydrolysis of the 2-acyl groups in 3-sn-phosphoglycerides. This is Phospholipase A2 from Crotalus atrox (Western diamondback rattlesnake).